Reading from the N-terminus, the 215-residue chain is Uridine kinase (215 aa).

G16 to S23 contributes to the ATP binding site.

Belongs to the uridine kinase family.

It localises to the cytoplasm. The catalysed reaction is uridine + ATP = UMP + ADP + H(+). It carries out the reaction cytidine + ATP = CMP + ADP + H(+). It participates in pyrimidine metabolism; CTP biosynthesis via salvage pathway; CTP from cytidine: step 1/3. Its pathway is pyrimidine metabolism; UMP biosynthesis via salvage pathway; UMP from uridine: step 1/1. The sequence is that of Uridine kinase from Aliivibrio salmonicida (strain LFI1238) (Vibrio salmonicida (strain LFI1238)).